Reading from the N-terminus, the 678-residue chain is Ribonuclease Z 2, mitochondrial (678 aa).

Residues 1-37 (MKASLLVPRRALLFGQLLPPKYSWYSVKRWQSQLTFR) constitute a mitochondrion transit peptide.

It belongs to the RNase Z family. It depends on Zn(2+) as a cofactor.

It is found in the mitochondrion. Its subcellular location is the cytoplasm. It catalyses the reaction Endonucleolytic cleavage of RNA, removing extra 3' nucleotides from tRNA precursor, generating 3' termini of tRNAs. A 3'-hydroxy group is left at the tRNA terminus and a 5'-phosphoryl group is left at the trailer molecule.. Its function is as follows. Zinc phosphodiesterase, which displays some tRNA 3'-processing endonuclease activity. May be involved in tRNA maturation, by removing a 3'-trailer from precursor tRNA. In Schizosaccharomyces pombe (strain 972 / ATCC 24843) (Fission yeast), this protein is Ribonuclease Z 2, mitochondrial (trz2).